Reading from the N-terminus, the 289-residue chain is MMNFILVLLIVAMIGTILVSESKYLFSKPVCKNCGVKAVTLPVDISAGKLAKVAEAVKKQTEEIKTLLKQKQSAPKAPELTNPIEHIKASTTVVSGANGLENVIDEDLPFSDFKGVPVAETTVEGMIKGIRPPTYADPRVMNPALAAAPVQFSDPTQFGTFGVTDDVSPAFSTEDKIPKTNAKISSDISVEGYENSYDANGARLVMDGKVVKSECQLPSYQIRNSKHHTQLPMRSLNEPPPMVEDLVDESLFEGLQGYPVDEKLDLLTPPGTATPSSEWAAINYGLTNN.

Residues 1–21 (MMNFILVLLIVAMIGTILVSE) are hydrophobic.

As to quaternary structure, interacts with the major capsid protein.

It localises to the virion. One of the minor capsid proteins that constitute a network internal to the major capsid proteins and outside the lipid membrane. The minor capsid proteins glue and stabilize the capsomers. The sequence is that of Minor capsid protein P10 from Chlorella (PBCV-1).